A 249-amino-acid chain; its full sequence is MADS-box transcription factor 17 (249 aa).

One can recognise an MADS-box domain in the interval 1-61 (MGRGRVELKR…GKLYEFGSAG (61 aa)). Residues 88–178 (HQSWYQEMSR…KNKLEAEADS (91 aa)) enclose the K-box domain. Residues 228–249 (ANPRSNGGGGDQNNNFVMGWPL) form a disordered region.

May interact with the K-box of MADS6. As to expression, expressed in the floral meristem, lodicule, palea, lemma, receptacle, empty glume, stamen, pistil, and ovule.

It localises to the nucleus. Functionally, probable transcription factor. Plays minor but redundant roles with MADS6 in floral development. The chain is MADS-box transcription factor 17 (MADS17) from Oryza sativa subsp. japonica (Rice).